A 175-amino-acid chain; its full sequence is Protein-export protein SecB (175 aa).

Over residues 153–163 (QQQPDAANGND) the composition is skewed to polar residues. Residues 153 to 175 (QQQPDAANGNDSGIILPPGATRQ) form a disordered region.

This sequence belongs to the SecB family. As to quaternary structure, homotetramer, a dimer of dimers. One homotetramer interacts with 1 SecA dimer.

It localises to the cytoplasm. Functionally, one of the proteins required for the normal export of preproteins out of the cell cytoplasm. It is a molecular chaperone that binds to a subset of precursor proteins, maintaining them in a translocation-competent state. It also specifically binds to its receptor SecA. This chain is Protein-export protein SecB, found in Bordetella bronchiseptica (strain ATCC BAA-588 / NCTC 13252 / RB50) (Alcaligenes bronchisepticus).